The chain runs to 311 residues: Porphobilinogen deaminase (311 aa).

S-(dipyrrolylmethanemethyl)cysteine is present on C243.

This sequence belongs to the HMBS family. In terms of assembly, monomer. Requires dipyrromethane as cofactor.

It carries out the reaction 4 porphobilinogen + H2O = hydroxymethylbilane + 4 NH4(+). Its pathway is porphyrin-containing compound metabolism; protoporphyrin-IX biosynthesis; coproporphyrinogen-III from 5-aminolevulinate: step 2/4. Tetrapolymerization of the monopyrrole PBG into the hydroxymethylbilane pre-uroporphyrinogen in several discrete steps. This chain is Porphobilinogen deaminase, found in Aliivibrio fischeri (strain ATCC 700601 / ES114) (Vibrio fischeri).